The sequence spans 149 residues: Stathmin (149 aa).

Residue A2 is modified to N-acetylalanine. S4 is modified (phosphoserine). An SLD domain is found at 4–145 (SDIQVKELEK…NKESKDPADE (142 aa)). The residue at position 9 (K9) is an N6-acetyllysine. S16 carries the post-translational modification Phosphoserine. Position 25 is a phosphoserine; by CDK1, MAPK1 and MAPK3 (S25). K29 carries the N6-methyllysine modification. At S31 the chain carries Phosphoserine. Phosphoserine; by CDK1, MAPK1 and MAPK3 is present on S38. Residues 41–140 (KKKDLSLEEI…EEVRKNKESK (100 aa)) adopt a coiled-coil conformation. Phosphoserine; by PKA is present on S63. N6-acetyllysine is present on residues K100 and K119. A compositionally biased stretch (basic and acidic residues) spans 121–143 (ERLREKDKHIEEVRKNKESKDPA). The disordered stretch occupies residues 121–149 (ERLREKDKHIEEVRKNKESKDPADETEAD).

It belongs to the stathmin family. Binds to two alpha/beta-tubulin heterodimers. Interacts with KIST. Many different phosphorylated forms are observed depending on specific combinations among the sites which can be phosphorylated. MAPK is responsible for the phosphorylation of stathmin in response to NGF. Phosphorylation at Ser-16 seems to be required for neuron polarization.

It is found in the cytoplasm. The protein localises to the cytoskeleton. Involved in the regulation of the microtubule (MT) filament system by destabilizing microtubules. Prevents assembly and promotes disassembly of microtubules. Its phosphorylation at Ser-16 may be required for axon formation during neurogenesis. Involved in the control of the learned and innate fear. The chain is Stathmin (STMN1) from Bos taurus (Bovine).